A 100-amino-acid polypeptide reads, in one-letter code: Enhancer of yellow 2 transcription factor (100 aa).

Belongs to the ENY2 family. As to quaternary structure, component of the nuclear pore complex (NPC)-associated AMEX complex (anchoring and mRNA export complex), composed of at least e(y)2 and xmas-2. Component of the SAGA transcription coactivator-HAT complexes, at least composed of Ada2b, e(y)2, Pcaf/Gcn5, Taf10 and Nipped-A/Trrap. Within the SAGA complex, e(y)2, Sgf11, and not/nonstop form an additional subcomplex of SAGA called the DUB module (deubiquitination module). Component of the THO complex, composed of at least e(y)2, HPR1, THO2, THOC5, THOC6 and THOC7. Interacts with e(y)1. Interacts with su(Hw) (via zinc fingers). Interacts with xmas-2; required for localization to the nuclear periphery. Interacts with the nuclear pore complex (NPC).

The protein localises to the nucleus. It localises to the nucleoplasm. Its subcellular location is the cytoplasm. Its function is as follows. Involved in mRNA export coupled transcription activation by association with both the AMEX and the SAGA complexes. The SAGA complex is a multiprotein complex that activates transcription by remodeling chromatin and mediating histone acetylation and deubiquitination. Within the SAGA complex, participates in a subcomplex that specifically deubiquitinates histone H2B. The SAGA complex is recruited to specific gene promoters by activators, where it is required for transcription. Required for nuclear receptor-mediated transactivation. Involved in transcription elongation by recruiting the THO complex onto nascent mRNA. The AMEX complex functions in docking export-competent ribonucleoprotein particles (mRNPs) to the nuclear entrance of the nuclear pore complex (nuclear basket). AMEX participates in mRNA export and accurate chromatin positioning in the nucleus by tethering genes to the nuclear periphery. The protein is Enhancer of yellow 2 transcription factor of Drosophila ananassae (Fruit fly).